The chain runs to 162 residues: Large ribosomal subunit protein uL15 (162 aa).

Positions 1–13 (MNLNELRDNEGSR) are enriched in basic and acidic residues. Positions 1–39 (MNLNELRDNEGSRYRKKRLGRGIGSGKGKTSGRGVKGQK) are disordered. Residues 21 to 35 (RGIGSGKGKTSGRGV) are compositionally biased toward gly residues.

This sequence belongs to the universal ribosomal protein uL15 family. In terms of assembly, part of the 50S ribosomal subunit.

Its function is as follows. Binds to the 23S rRNA. This chain is Large ribosomal subunit protein uL15, found in Gluconobacter oxydans (strain 621H) (Gluconobacter suboxydans).